A 141-amino-acid polypeptide reads, in one-letter code: Nucleoside diphosphate kinase (141 aa).

Lysine 11, tyrosine 59, arginine 87, threonine 93, arginine 104, and asparagine 114 together coordinate ATP. Catalysis depends on histidine 117, which acts as the Pros-phosphohistidine intermediate.

The protein belongs to the NDK family. As to quaternary structure, homotetramer. The cofactor is Mg(2+).

It is found in the cytoplasm. It carries out the reaction a 2'-deoxyribonucleoside 5'-diphosphate + ATP = a 2'-deoxyribonucleoside 5'-triphosphate + ADP. The catalysed reaction is a ribonucleoside 5'-diphosphate + ATP = a ribonucleoside 5'-triphosphate + ADP. Functionally, major role in the synthesis of nucleoside triphosphates other than ATP. The ATP gamma phosphate is transferred to the NDP beta phosphate via a ping-pong mechanism, using a phosphorylated active-site intermediate. The protein is Nucleoside diphosphate kinase of Orientia tsutsugamushi (strain Boryong) (Rickettsia tsutsugamushi).